A 318-amino-acid chain; its full sequence is HTH-type transcriptional regulatory protein TyrR (318 aa).

Positions 15–239 (FIVQSEAMKS…LYNTLYRACS (225 aa)) constitute a Sigma-54 factor interaction; truncated domain. ATP-binding positions include 43 to 50 (GETGSGKD) and 101 to 110 (ANKGTVLLDG). Positions 292 to 312 (STRKLAQRLGVSHTAIANKLK) form a DNA-binding region, H-T-H motif.

In terms of assembly, homodimer. In presence of tyrosine (or high concentrations of phenylalanine or tryptophan) and ATP, it self-associates to form a hexamer.

The protein localises to the cytoplasm. With respect to regulation, the DNA binding ability is drastically reduced in the presence of ATP. Tyrosine further reduces the binding affinity of TyrR in the presence of ATP. In terms of biological role, transcriptional regulator of the TyrR regulon, which includes a number of genes coding for proteins involved in the biosynthesis or transport of the three aromatic amino acids, phenylalanine, tyrosine and tryptophan. These three aromatic amino acids act as effectors which bind to the TyrR protein to form an active regulatory protein. Acts by binding specifically to TyrR boxes in the promoter region of the target genes. Can efficiently repress the transcription of the aroF promoter, but lacks the ability to function as a transcriptional activator. The sequence is that of HTH-type transcriptional regulatory protein TyrR from Haemophilus influenzae (strain ATCC 51907 / DSM 11121 / KW20 / Rd).